The following is a 218-amino-acid chain: Serine/threonine-protein phosphatase 1 (218 aa).

Mn(2+) is bound by residues Asp24, His26, Asp53, and Asn79. His80 serves as the catalytic Proton donor. Residue His187 coordinates Mn(2+).

Belongs to the PPP phosphatase family. PP-1 subfamily. Mn(2+) is required as a cofactor.

The catalysed reaction is O-phospho-L-seryl-[protein] + H2O = L-seryl-[protein] + phosphate. The enzyme catalyses O-phospho-L-threonyl-[protein] + H2O = L-threonyl-[protein] + phosphate. In terms of biological role, plays a key role in signaling protein misfolding via the CpxR/CPXA transducing system. It also modulates the phosphorylated status of many phosphoproteins in E.coli, some of which acting as major chaperones. Has been shown, in vitro, to act on Ser, Thr and Tyr-phosphorylated substrates. The protein is Serine/threonine-protein phosphatase 1 (pphA) of Escherichia coli (strain K12).